A 1057-amino-acid polypeptide reads, in one-letter code: Atrial natriuretic peptide receptor 1 (1057 aa).

An N-terminal signal peptide occupies residues 1 to 28; it reads MPGSRRVRPRLRALLLLPPLLLLRSGHA. At 29-469 the chain is on the extracellular side; the sequence is SDLTVAVVLP…CNQDHFSTLE (441 aa). The N-linked (GlcNAc...) asparagine glycan is linked to N41. Positions 81, 113, and 114 each coordinate chloride. 2 disulfide bridges follow: C88-C114 and C192-C241. N208, N334, N375, N382, and N423 each carry an N-linked (GlcNAc...) asparagine glycan. C451 and C460 form a disulfide bridge. The helical transmembrane segment at 470–490 threads the bilayer; sequence VLALVGSLSLVSFLIVSFFIY. Residues 491–1057 lie on the Cytoplasmic side of the membrane; the sequence is RKMQLEKELV…LGERGCSTRG (567 aa). Phosphoserine occurs at positions 515 and 525. Residues 524–801 form the Protein kinase domain; sequence GSRLTLSGRG…QIRLALRKFN (278 aa). At T528 the chain carries Phosphothreonine. Phosphoserine is present on residues S530, S534, and S538. A Phosphothreonine modification is found at T541. A Guanylate cyclase domain is found at 872-1002; sequence TIYFSDIVGF…DTVNTASRME (131 aa).

Belongs to the adenylyl cyclase class-4/guanylyl cyclase family. In terms of assembly, homodimer. Phosphorylation of the protein kinase-like domain is required for full activation by ANP.

The protein resides in the membrane. It catalyses the reaction GTP = 3',5'-cyclic GMP + diphosphate. In terms of biological role, receptor for the atrial natriuretic peptide NPPA/ANP and the brain natriuretic peptide NPPB/BNP which are potent vasoactive hormones playing a key role in cardiovascular homeostasis. Plays an essential role in the regulation of endothelial cell senescence and vascular aging. Upon activation by ANP or BNP, stimulates the production of cyclic guanosine monophosphate (cGMP) that promotes vascular tone and volume homeostasis by activation of protein kinase cGMP-dependent 1/PRKG1 and subsequently PRKAA1, thereby controlling blood pressure and maintaining cardiovascular homeostasis. The protein is Atrial natriuretic peptide receptor 1 (Npr1) of Mus musculus (Mouse).